We begin with the raw amino-acid sequence, 108 residues long: uncharacterized protein (108 aa).

The 55-residue stretch at 20 to 74 (VRQRRTALILDQETLARRIGVSFQQIQKYERGRNRISASRLYDIAKALAVPIDYF) folds into the HTH cro/C1-type domain. A DNA-binding region (H-T-H motif) is located at residues 31–50 (QETLARRIGVSFQQIQKYER).

This is an uncharacterized protein from Rhodospirillum rubrum.